The sequence spans 499 residues: Gypsy retrotransposon integrase-like protein 1 (499 aa).

In terms of domain architecture, Integrase catalytic spans 113–270 (KVENPWSIVT…TPYFQMFNRN (158 aa)).

The chain is Gypsy retrotransposon integrase-like protein 1 (GIN1) from Bos taurus (Bovine).